A 298-amino-acid polypeptide reads, in one-letter code: GTP cyclohydrolase FolE2 (298 aa).

The protein belongs to the GTP cyclohydrolase IV family.

The catalysed reaction is GTP + H2O = 7,8-dihydroneopterin 3'-triphosphate + formate + H(+). It participates in cofactor biosynthesis; 7,8-dihydroneopterin triphosphate biosynthesis; 7,8-dihydroneopterin triphosphate from GTP: step 1/1. Its function is as follows. Converts GTP to 7,8-dihydroneopterin triphosphate. This chain is GTP cyclohydrolase FolE2, found in Xylella fastidiosa (strain M23).